A 361-amino-acid chain; its full sequence is D-alanine--D-alanine ligase (361 aa).

In terms of domain architecture, ATP-grasp spans 144–350 (KLAAADAGLA…FMELTDRLIR (207 aa)). Residue 177 to 232 (VASLSFPMFVKPVSLGSSVGITKVNSESELAEAITHACSLDSKVLIEQAVKGREVE) coordinates ATP. Mg(2+) is bound by residues aspartate 303, glutamate 317, and asparagine 319.

The protein belongs to the D-alanine--D-alanine ligase family. The cofactor is Mg(2+). Mn(2+) is required as a cofactor.

The protein resides in the cytoplasm. It carries out the reaction 2 D-alanine + ATP = D-alanyl-D-alanine + ADP + phosphate + H(+). It participates in cell wall biogenesis; peptidoglycan biosynthesis. Functionally, cell wall formation. The chain is D-alanine--D-alanine ligase from Chlorobium luteolum (strain DSM 273 / BCRC 81028 / 2530) (Pelodictyon luteolum).